The primary structure comprises 2334 residues: Centriolin (2334 aa).

Residues 1-70 (MKKGSERRLS…ESTVPLEPQQ (70 aa)) are disordered. Low complexity predominate over residues 21–38 (PGPSSLRSSMRSRSLSPL). LRR repeat units lie at residues 126–147 (KLEV…DKLL), 148–169 (RLRE…ENMC), 170–191 (NLQK…FAKK), and 194–215 (SLRV…SKLK). One can recognise an LRRCT domain in the interval 228-266 (NPVVALPHYLQFIIFHLRSLESLEGQPVTTQDRQEAFER). Coiled coils occupy residues 265–343 (ERFS…VELT) and 437–800 (DLQL…LNHV). Disordered stretches follow at residues 542–562 (DSLD…RGKE) and 751–771 (SLRD…ENNE). A Phosphoserine modification is found at Ser832. The stretch at 858 to 1102 (EKEEAQVRER…ITRLRDVLNL (245 aa)) forms a coiled coil. Disordered stretches follow at residues 1154–1198 (SKVS…PLPA), 1213–1245 (KSFS…VPPP), and 1338–1360 (LKSK…EEVD). Residues 1227–1238 (SQEESGLDDQEE) show a composition bias toward acidic residues. The stretch at 1320–2169 (EHHNLENEVS…MRTLKSEVKD (850 aa)) forms a coiled coil. Ser1478 is subject to Phosphoserine. The tract at residues 1951–2121 (MMFQKLQKER…ELVAQDNHER (171 aa)) is required for centrosome localization. The interval 1988 to 2334 (QKSRLKQLLT…PLEEPNSYRH (347 aa)) is sufficient for interaction with HOOK2. The segment covering 2291–2307 (TSTSTDSASSPSLPSLV) has biased composition (low complexity). The disordered stretch occupies residues 2291–2334 (TSTSTDSASSPSLPSLVEDSQHGHSQSSFQVLQVPLEEPNSYRH).

As to quaternary structure, interacts with HOOK2. Interacts with EXOC6 and SNAPIN. Associates with the exocyst complex. In terms of tissue distribution, highly expressed in liver.

The protein resides in the cytoplasm. The protein localises to the cytoskeleton. It localises to the microtubule organizing center. It is found in the centrosome. Its subcellular location is the midbody. The protein resides in the midbody ring. Functionally, involved in cell cycle progression and cytokinesis. During the late steps of cytokinesis, anchors exocyst and SNARE complexes at the midbody, thereby allowing secretory vesicle-mediated abscission. The polypeptide is Centriolin (Cntrl) (Mus musculus (Mouse)).